A 187-amino-acid chain; its full sequence is uncharacterized protein (187 aa).

A lipid anchor (N-myristoyl glycine; by host) is attached at glycine 2.

The protein belongs to the mimivirus L332/L333/L334 family.

This is an uncharacterized protein from Acanthamoeba polyphaga (Amoeba).